Consider the following 310-residue polypeptide: Glycerol-3-phosphate dehydrogenase [NAD(P)+] (310 aa).

Positions 14, 34, 35, and 82 each coordinate NADPH. 2 residues coordinate sn-glycerol 3-phosphate: K82 and G110. Residue S114 participates in NADPH binding. K165, D218, S228, R229, and N230 together coordinate sn-glycerol 3-phosphate. The active-site Proton acceptor is the K165. An NADPH-binding site is contributed by R229. Residue E255 coordinates NADPH.

The protein belongs to the NAD-dependent glycerol-3-phosphate dehydrogenase family.

It is found in the cytoplasm. The catalysed reaction is sn-glycerol 3-phosphate + NAD(+) = dihydroxyacetone phosphate + NADH + H(+). The enzyme catalyses sn-glycerol 3-phosphate + NADP(+) = dihydroxyacetone phosphate + NADPH + H(+). The protein operates within membrane lipid metabolism; glycerophospholipid metabolism. Functionally, catalyzes the reduction of the glycolytic intermediate dihydroxyacetone phosphate (DHAP) to sn-glycerol 3-phosphate (G3P), the key precursor for phospholipid synthesis. The protein is Glycerol-3-phosphate dehydrogenase [NAD(P)+] of Acaryochloris marina (strain MBIC 11017).